A 141-amino-acid polypeptide reads, in one-letter code: U1 small nuclear ribonucleoprotein C (141 aa).

The Matrin-type zinc-finger motif lies at 4 to 36; the sequence is YYCEYCDKYLTHDSPSVRKSHTIGKVHQQAVTL. A disordered region spans residues 69-141; that stretch reads LLPPNMVPGQ…SNSPPSNNDQ (73 aa). The span at 83-97 shows a compositional bias: pro residues; it reads MMPPGQFPFPPPPGQ. Low complexity-rich tracts occupy residues 100–110 and 124–141; these read GGMPPHQQQPM and QQSA…NNDQ.

Belongs to the U1 small nuclear ribonucleoprotein C family. In terms of assembly, component of the U1 snRNP. The U1 snRNP is composed of the U1 snRNA and the 7 core Sm proteins SNRPB, SNRPD1, SNRPD2, SNRPD3, SNRPE, SNRPF and SNRPG that assemble in a heptameric protein ring on the Sm site of the small nuclear RNA to form the core snRNP, and at least 3 U1 snRNP-specific proteins SNRNP70/U1-70K, SNRPA/U1-A and SNRPC/U1-C. SNRPC/U1-C interacts with U1 snRNA and the 5' splice-site region of the pre-mRNA.

The protein localises to the nucleus. In terms of biological role, component of the spliceosomal U1 snRNP, which is essential for recognition of the pre-mRNA 5' splice-site and the subsequent assembly of the spliceosome. SNRPC/U1-C is directly involved in initial 5' splice-site recognition for both constitutive and regulated alternative splicing. The interaction with the 5' splice-site seems to precede base-pairing between the pre-mRNA and the U1 snRNA. Stimulates commitment or early (E) complex formation by stabilizing the base pairing of the 5' end of the U1 snRNA and the 5' splice-site region. The chain is U1 small nuclear ribonucleoprotein C from Heterostelium pallidum (strain ATCC 26659 / Pp 5 / PN500) (Cellular slime mold).